The sequence spans 465 residues: Coumaroyl-CoA:anthocyanidin 3-O-glucoside-6''-O-coumaroyltransferase 2 (465 aa).

Methionine 1 bears the N-acetylmethionine mark. Active-site proton acceptor residues include histidine 173 and aspartate 406.

The protein belongs to the plant acyltransferase family. Highly expressed in flowers, and leaves. Lower levels of expression in stems, roots and siliques.

Involved in the acylation of the 6'' position of the 3-O-glucose residue of anthocyanin. Also able to use flavonol 3-glucosides as the acyl acceptor. In Arabidopsis thaliana (Mouse-ear cress), this protein is Coumaroyl-CoA:anthocyanidin 3-O-glucoside-6''-O-coumaroyltransferase 2 (3AT2).